A 696-amino-acid polypeptide reads, in one-letter code: Divalent metal transporter 1 (696 aa).

A disordered region spans residues 1-31; sequence MHQDNSMRRAINQSRNGGSDSCDINNDREHD. Residues 1–236 are Cytoplasmic-facing; the sequence is MHQDNSMRRA…RSNRLSFMSK (236 aa). The segment covering 11–24 has biased composition (polar residues); the sequence is INQSRNGGSDSCDI. The chain crosses the membrane as a helical span at residues 237–255; it reads LKMYFNYFGPGWIVAIAYL. At 256–288 the chain is on the vacuolar side; that stretch reads DPGNICGNLNVGLIRSDDFINVNSSVKDYTGYR. N278 is a glycosylation site (N-linked (GlcNAc...) asparagine). The helical transmembrane segment at 289–311 threads the bilayer; that stretch reads LLWVLVYGHILGFIFHTLSMKLG. Topologically, residues 312–331 are cytoplasmic; it reads HITGLDLAALCRKEFSSKFS. A helical membrane pass occupies residues 332–357; it reads YFLYICVQIAIWGAHLQAIIGVFVAI. At 358–362 the chain is on the vacuolar side; the sequence is NLILG. A helical membrane pass occupies residues 363–382; the sequence is IPVKIAILYTLIEAFAYSFL. Residues 383–393 are Cytoplasmic-facing; it reads ENKSLDLLEKV. Residues 394 to 416 traverse the membrane as a helical segment; that stretch reads LSLLIGILVCCFMFNVFMTPINF. The Vacuolar segment spans residues 417-435; the sequence is QEVASSILYPRIPKGKLLD. Residues 436-455 traverse the membrane as a helical segment; it reads TMGLLGSVISAHIFYLHSNL. The Cytoplasmic segment spans residues 456–475; that stretch reads TSKKKPVIYNDRMVKRYNKL. A helical transmembrane segment spans residues 476–499; the sequence is GTIESGGSLLVSCITNCIIVLTFA. Topologically, residues 500 to 529 are vacuolar; sequence EVNISGDDRKADYNLFNAYDVMKKYFGKTS. N-linked (GlcNAc...) asparagine glycosylation occurs at N502. A helical membrane pass occupies residues 530-546; it reads MYIWSFGLLSSGNNASF. Residues 547 to 566 lie on the Cytoplasmic side of the membrane; that stretch reads MCEYASKSVFEGFLNKNVNP. The helical transmembrane segment at 567-585 threads the bilayer; sequence FFRVIFSRIILFIMLYAYV. The Vacuolar segment spans residues 586-596; that stretch reads SYDKYTIDQLS. A helical membrane pass occupies residues 597–615; it reads NFINVVQILLLPLAIIPLY. Residues 616–634 lie on the Cytoplasmic side of the membrane; it reads RFSIHKNVLGKFAIKGAFK. The chain crosses the membrane as a helical span at residues 635–657; that stretch reads YLVFVLVISIIVANFLLTLFDFL. Over 658-662 the chain is Vacuolar; it reads QYAPS. Residues 663–684 traverse the membrane as a helical segment; it reads NLYVIFIFISSIFYLLFIIYFF. Residues 685 to 696 are Cytoplasmic-facing; the sequence is NMPITKTYYKDS.

The protein belongs to the NRAMP (TC 2.A.55) family.

It localises to the vacuole membrane. The catalysed reaction is Fe(2+)(in) = Fe(2+)(out). Iron transporter. Required for parasite development during the blood stages. Required for full pathogenicity. This chain is Divalent metal transporter 1, found in Plasmodium yoelii.